The sequence spans 140 residues: Probable prefoldin subunit 6 (140 aa).

This sequence belongs to the prefoldin subunit beta family. As to quaternary structure, heterohexamer of two PFD-alpha type and four PFD-beta type subunits.

Functionally, binds specifically to cytosolic chaperonin (c-CPN) and transfers target proteins to it. Binds to nascent polypeptide chain and promotes folding in an environment in which there are many competing pathways for nonnative proteins. This is Probable prefoldin subunit 6 (pfdn6) from Dictyostelium discoideum (Social amoeba).